Consider the following 346-residue polypeptide: Proto-oncogene serine/threonine-protein kinase mos (346 aa).

The 282-residue stretch at valine 60–leucine 341 folds into the Protein kinase domain. ATP is bound by residues leucine 66 to valine 74 and lysine 87. The active-site Proton acceptor is aspartate 201.

It belongs to the protein kinase superfamily. Ser/Thr protein kinase family.

The catalysed reaction is L-seryl-[protein] + ATP = O-phospho-L-seryl-[protein] + ADP + H(+). It carries out the reaction L-threonyl-[protein] + ATP = O-phospho-L-threonyl-[protein] + ADP + H(+). In Chlorocebus aethiops (Green monkey), this protein is Proto-oncogene serine/threonine-protein kinase mos.